Reading from the N-terminus, the 448-residue chain is Squalene synthase ERG9 (448 aa).

The chain crosses the membrane as a helical span at residues 428 to 448; sequence CNVVLFGIGALILSLIYFVLY.

Belongs to the phytoene/squalene synthase family. Requires Mg(2+) as cofactor.

Its subcellular location is the endoplasmic reticulum membrane. The protein resides in the microsome. The catalysed reaction is 2 (2E,6E)-farnesyl diphosphate + NADPH + H(+) = squalene + 2 diphosphate + NADP(+). It catalyses the reaction 2 (2E,6E)-farnesyl diphosphate + NADH + H(+) = squalene + 2 diphosphate + NAD(+). Its pathway is terpene metabolism; lanosterol biosynthesis; lanosterol from farnesyl diphosphate: step 1/3. Squalene synthase; part of the third module of ergosterol biosynthesis pathway that includes the late steps of the pathway. ERG9 produces squalene from 2 farnesyl pyrophosphate moieties. The third module or late pathway involves the ergosterol synthesis itself through consecutive reactions that mainly occur in the endoplasmic reticulum (ER) membrane. Firstly, the squalene synthase ERG9 catalyzes the condensation of 2 farnesyl pyrophosphate moieties to form squalene, which is the precursor of all steroids. Squalene synthase is crucial for balancing the incorporation of farnesyl diphosphate (FPP) into sterol and nonsterol isoprene synthesis. Secondly, the squalene epoxidase ERG1 catalyzes the stereospecific oxidation of squalene to (S)-2,3-epoxysqualene, which is considered to be a rate-limiting enzyme in steroid biosynthesis. Then, the lanosterol synthase ERG7 catalyzes the cyclization of (S)-2,3 oxidosqualene to lanosterol, a reaction that forms the sterol core. In the next steps, lanosterol is transformed to zymosterol through a complex process involving various demethylation, reduction and desaturation reactions. The lanosterol 14-alpha-demethylase ERG11 (also known as CYP51) catalyzes C14-demethylation of lanosterol to produce 4,4'-dimethyl cholesta-8,14,24-triene-3-beta-ol, which is critical for ergosterol biosynthesis. The C-14 reductase ERG24 reduces the C14=C15 double bond of 4,4-dimethyl-cholesta-8,14,24-trienol to produce 4,4-dimethyl-cholesta-8,24-dienol. 4,4-dimethyl-cholesta-8,24-dienol is substrate of the C-4 demethylation complex ERG25-ERG26-ERG27 in which ERG25 catalyzes the three-step monooxygenation required for the demethylation of 4,4-dimethyl and 4alpha-methylsterols, ERG26 catalyzes the oxidative decarboxylation that results in a reduction of the 3-beta-hydroxy group at the C-3 carbon to an oxo group, and ERG27 is responsible for the reduction of the keto group on the C-3. ERG28 has a role as a scaffold to help anchor ERG25, ERG26 and ERG27 to the endoplasmic reticulum and ERG29 regulates the activity of the iron-containing C4-methylsterol oxidase ERG25. Then, the sterol 24-C-methyltransferase ERG6 catalyzes the methyl transfer from S-adenosyl-methionine to the C-24 of zymosterol to form fecosterol. The C-8 sterol isomerase ERG2 catalyzes the reaction which results in unsaturation at C-7 in the B ring of sterols and thus converts fecosterol to episterol. The sterol-C5-desaturase ERG3 then catalyzes the introduction of a C-5 double bond in the B ring to produce 5-dehydroepisterol. The C-22 sterol desaturase ERG5 further converts 5-dehydroepisterol into ergosta-5,7,22,24(28)-tetraen-3beta-ol by forming the C-22(23) double bond in the sterol side chain. Finally, ergosta-5,7,22,24(28)-tetraen-3beta-ol is substrate of the C-24(28) sterol reductase ERG4 to produce ergosterol. The sequence is that of Squalene synthase ERG9 from Candida albicans (strain SC5314 / ATCC MYA-2876) (Yeast).